The following is a 727-amino-acid chain: Tubulin polyglutamylase TTLL11 (727 aa).

The span at 1 to 12 (MRRSSPEKKPEA) shows a compositional bias: basic and acidic residues. Residues 1–88 (MRRSSPEKKP…ARVVRRLPPA (88 aa)) form a disordered region. Residues 17–34 (DAAAAAAATAAATESLPA) are compositionally biased toward low complexity. Basic and acidic residues-rich tracts occupy residues 49 to 63 (DPER…KDVG) and 72 to 81 (HAPEEGEARV). The TTL domain maps to 125–477 (PVTVDSSKAR…EVKVAVIRDT (353 aa)). ATP is bound by residues lysine 246, 252–253 (QG), 279–282 (QEYI), and 292–294 (KFD). Glutamine 252 serves as a coordination point for a protein. Residue arginine 318 participates in L-glutamate binding. 340 to 341 (TN) lines the ATP pocket. L-glutamate contacts are provided by tyrosine 342, serine 343, and lysine 362. Mg(2+)-binding residues include aspartate 425, glutamate 438, and asparagine 440. A c-MTBD region region spans residues 464 to 566 (LVDEEVKVAV…SICLKQVFPK (103 aa)). Lysine 470 provides a ligand contact to L-glutamate. 2 disordered regions span residues 530-551 (KSFT…EPNP) and 694-727 (RPLQ…LSQS).

The protein belongs to the tubulin--tyrosine ligase family. Mg(2+) serves as cofactor. As to expression, highly expressed in brain, kidney, liver, lung, muscle and testis. Expressed in heart, spleen and trachea. In the brain, expressed in ependymal cilia, cortex, corpus callosum and striatum.

It is found in the cytoplasm. It localises to the cytoskeleton. The protein resides in the cilium basal body. It carries out the reaction L-glutamyl-[protein] + L-glutamate + ATP = gamma-L-glutamyl-L-glutamyl-[protein] + ADP + phosphate + H(+). It catalyses the reaction (L-glutamyl)(n)-gamma-L-glutamyl-L-glutamyl-[protein] + L-glutamate + ATP = (L-glutamyl)(n+1)-gamma-L-glutamyl-L-glutamyl-[protein] + ADP + phosphate + H(+). In terms of biological role, polyglutamylase which modifies tubulin, generating polyglutamate side chains of variable lengths on the gamma-carboxyl group of specific glutamate residues within the C-terminal tail of tubulin. Preferentially mediates ATP-dependent polyglutamate long side-chain elongation over the initiation step of the polyglutamylation reaction. Preferentially modifies the alpha-tubulin tail over a beta-tail. Required for CCSAP localization to both spindle and cilia microtubules. Promotes tubulin polyglutamylation which stimulates spastin/SPAST-mediated microtubule severing, thereby regulating microtubule functions. The chain is Tubulin polyglutamylase TTLL11 from Mus musculus (Mouse).